Consider the following 638-residue polypeptide: DNA gyrase subunit B (638 aa).

The 115-residue stretch at 431-545 (RELFIVEGNS…YGFVYIAQPP (115 aa)) folds into the Toprim domain. The Mg(2+) site is built by glutamate 437, aspartate 510, and aspartate 512.

The protein belongs to the type II topoisomerase GyrB family. As to quaternary structure, heterotetramer, composed of two GyrA and two GyrB chains. In the heterotetramer, GyrA contains the active site tyrosine that forms a transient covalent intermediate with DNA, while GyrB binds cofactors and catalyzes ATP hydrolysis. Mg(2+) is required as a cofactor. It depends on Mn(2+) as a cofactor. Requires Ca(2+) as cofactor.

It is found in the cytoplasm. The catalysed reaction is ATP-dependent breakage, passage and rejoining of double-stranded DNA.. A type II topoisomerase that negatively supercoils closed circular double-stranded (ds) DNA in an ATP-dependent manner to modulate DNA topology and maintain chromosomes in an underwound state. Negative supercoiling favors strand separation, and DNA replication, transcription, recombination and repair, all of which involve strand separation. Also able to catalyze the interconversion of other topological isomers of dsDNA rings, including catenanes and knotted rings. Type II topoisomerases break and join 2 DNA strands simultaneously in an ATP-dependent manner. This chain is DNA gyrase subunit B, found in Metamycoplasma arthritidis (Mycoplasma arthritidis).